The chain runs to 572 residues: Solute carrier family 22 member 16 (572 aa).

Residues 21 to 41 traverse the membrane as a helical segment; the sequence is IFLYFICAFQNISCGIHYLAS. N-linked (GlcNAc...) asparagine glycosylation is present at Asn57. Helical transmembrane passes span 156–176, 183–203, 208–228, 244–264, and 268–288; these read LIQPTFMFGVLLGAVIFGYLS, LVLWASSTGVFLFGIAAAFTF, FIVARFLLAISGSGYLVVVFV, IHLHSFFAFGTMVVALTGYFV, and WIYQIVLSSVTVPFVLCCWML. N-linked (GlcNAc...) asparagine glycosylation occurs at Asn315. 6 helical membrane-spanning segments follow: residues 359 to 379, 389 to 409, 416 to 436, 441 to 461, 476 to 496, and 503 to 523; these read TLILWLIWFTGCLGFYTFSLN, LNLFLMGVVEIPAYVLVCLGM, NILIFSLLSSAVTSGVIMVIP, VWLVVASMAGKFFIGAAFGLI, LAVGSGSTVGRVGSIVAPLCI, and IFMPQLLVGTLALVSGVLTFL. An N-linked (GlcNAc...) asparagine glycan is attached at Asn559.

This sequence belongs to the major facilitator (TC 2.A.1) superfamily. Organic cation transporter (TC 2.A.1.19) family.

It is found in the cell membrane. It catalyses the reaction (R)-carnitine(in) = (R)-carnitine(out). The catalysed reaction is spermidine(in) = spermidine(out). Functionally, facilitative organic cation transporter that mediates the transport of carnitine as well as the polyamine spermidine. Mediates the partially Na(+)-dependent bidirectional transport of carnitine. May mediate L-carnitine secretion from testis epididymal epithelium into the lumen which is involved in the maturation of spermatozoa. The polypeptide is Solute carrier family 22 member 16 (SLC22A16) (Bos taurus (Bovine)).